Consider the following 756-residue polypeptide: U3 small nucleolar RNA-associated protein 25 homolog (756 aa).

The tract at residues 1 to 159 is disordered; it reads MGKRGSRSQS…SQTSPEEFTD (159 aa). Promotes p53/TP53 degradation stretches follow at residues 1 to 185 and 573 to 635; these read MGKR…SLKA and VQLP…KKEE. Phosphoserine is present on Ser-10. Positions 25-43 are enriched in basic and acidic residues; that stretch reads RDFGEEHPFYDRVSRKEAK. Residues Ser-50, Ser-52, Ser-58, Ser-60, Ser-62, and Ser-64 each carry the phosphoserine modification. Acidic residues-rich tracts occupy residues 54–64 and 84–121; these read DSSDSESDSES and EEEE…EEMA. The tract at residues 636–697 is represses p53/TP53 degradation; the sequence is LNFTHICEYT…YELPTYPHFY (62 aa).

The protein belongs to the UTP25 family. In terms of assembly, interacts with CAPN3; the interaction is required for CAPN3 translocation to the nucleolus. Phosphorylated. Phosphorylation is required to promote p53/TP53 degradation in the nucleolus which promotes cell cycle progression and liver development. In terms of tissue distribution, expressed in colon.

It localises to the nucleus. It is found in the nucleolus. Component of the ribosomal small subunit processome for the biogenesis of ribosomes, functions in pre-ribosomal RNA (pre-rRNA) processing. Essential for embryonic development in part through the regulation of p53 pathway. Controls the expansion growth of digestive organs and liver. Also involved in the sympathetic neuronal development. Mediates, with CAPN3, the proteasome-independent degradation of p53/TP53. The polypeptide is U3 small nucleolar RNA-associated protein 25 homolog (Homo sapiens (Human)).